Here is a 198-residue protein sequence, read N- to C-terminus: Recombination protein RecR (198 aa).

The C4-type zinc finger occupies 57-72; the sequence is CSVCGHITDQDPCAIC. Positions 80–175 constitute a Toprim domain; it reads SLICVVQDPK…RTTRIAHGLP (96 aa).

This sequence belongs to the RecR family.

May play a role in DNA repair. It seems to be involved in an RecBC-independent recombinational process of DNA repair. It may act with RecF and RecO. The chain is Recombination protein RecR from Oceanobacillus iheyensis (strain DSM 14371 / CIP 107618 / JCM 11309 / KCTC 3954 / HTE831).